A 269-amino-acid polypeptide reads, in one-letter code: Large ribosomal subunit protein uL3m (269 aa).

The transit peptide at Met-1–Tyr-19 directs the protein to the mitochondrion.

It belongs to the universal ribosomal protein uL3 family. Component of the mitochondrial large ribosomal subunit (mt-LSU). Mature yeast 74S mitochondrial ribosomes consist of a small (37S) and a large (54S) subunit. The 37S small subunit contains a 15S ribosomal RNA (15S mt-rRNA) and 34 different proteins. The 54S large subunit contains a 21S rRNA (21S mt-rRNA) and 46 different proteins.

It localises to the mitochondrion. Component of the mitochondrial ribosome (mitoribosome), a dedicated translation machinery responsible for the synthesis of mitochondrial genome-encoded proteins, including at least some of the essential transmembrane subunits of the mitochondrial respiratory chain. The mitoribosomes are attached to the mitochondrial inner membrane and translation products are cotranslationally integrated into the membrane. In Saccharomyces cerevisiae (strain ATCC 204508 / S288c) (Baker's yeast), this protein is Large ribosomal subunit protein uL3m (MRPL9).